The sequence spans 133 residues: MLQPKRTKFRKMHKGRNRGIVVNDKINFGTFALKSVDRGRLKSCQIESARRAITRAIKRQGKVWIRIFPDKPITQKPLEVRMGKGKGNVEYWVALVQPGKILYEMSGVSKELADHAFKLGSSKLPVRTVVTGI.

It belongs to the universal ribosomal protein uL16 family. In terms of assembly, part of the 50S ribosomal subunit.

In terms of biological role, binds 23S rRNA and is also seen to make contacts with the A and possibly P site tRNAs. This chain is Large ribosomal subunit protein uL16, found in Blochmanniella floridana.